Here is a 2190-residue protein sequence, read N- to C-terminus: MQHHQQQQPEQHPEEANYASSTRIPLPGDGPTTQSNSSAPSKQTVLSWQAAIDAARQAKAAQNMNTTTAQPVGSLSQRKRQQYAKSKKQGNTSNSRPPRALFCLSLNNPIRRACISLVEWKPFDIFILLSIFANCVALAVYIPFPEDDSNSTNHNLEKVEYAFLIIFTVETFLKIIAYGLLLHPNAYVRNGWNLLDFVIVVVGLFSVILEQLTKETEGGSHSGGKPGGFDVKALRAFRVLRPLRLVSGVPSLQVVLNSIIKAMVPLLHIALLVLFVIIIYAIIGLELFIGKMHKSCFLIDSDILVEEDPAPCAFSGNGRQCVMNGTECKGGWVGPNGGITNFDNFAFAMLTVFQCITMEGWTDVLYWVNDAIGCEWPWIYFVSLIILGSFFVLNLVLGVLSGEFSKEREKAKARGDFQKLREKQQLEEDLKGYLDWITQAEDIDPENDEEADEEGKRNRVTLADLMEEKKKSRLSCFGRSSNKHASMPTSETESVNTENVSGEGENPACCGSLCQTISKSKFSRRWRRWNRFNRRKCRAAVKSVTFYWLVIVLVFLNTLTISSEHYNQPDWLTQIQDIANKVLLALFTCEMLVKMYSLGLQAYFVSLFNRFDCFVVCGGIVETILVELEIMSPLGISVFRCVRLLRIFKVTRHWASLSNLVASLLNSMKSIASLLLLLFLFIIIFSLLGMQLFGGKFNFDETQTKRSTFDNFPQALLTVFQILTGEDWNAVMYDGIMAYGGPSSSGMIVCIYFIILFICGNYILLNVFLAIAVDNLADAESLNTAQKEEAEEKERKKNARKESLENKKSEKSEGDQKKPKDSKVTIAEYGEGEDEDKDPYPPCDVPVGEDEEDEEDEPEVPAGPRPRRISELNMKEKITPIPEGSAFFIFSSTNPIRVGCHRLINHHIFTNLILVFIMLSSVSLAAEDPIRSHSFRNNILGYADYVFTSMFTFEIILKMTAFGAFLHKGSFCRNYFNLLDLLVVGVSLVSFGIQSSAISVVKILRVLRVLRPLRAINRAKGLKHVVQCVFVAIRTIGNIMIVTTLLQFMFACIGVQLFKGKFYKCTDEAKQNPEECRGIYIVYKDGDVDNPMVKERVWQNSDFNFDNVLSAMMALFTVSTFEGWPALLYKAIDSNGENVGPVYNYRVEISIFFIIYIIIIAFFMMNIFVGFVIVTFQEQGEQEYKNCELDKNQRQCVEYALKARPLRRYIPKNPYQYKFWYVVNSTGFEYIMFVLIMLNTLCLAMQHYGQSKLFNDAMDIMNMVFTGVFTVEMVLKLIAFKPKIFVRKKERWLGYFSDAWNTFDSLIVIGSIVDVVLSEADPKPTETVTTDESGNSEDSARISITFFRLFRVMRLVKLLSRGEGIRTLLWTFIKSFQALPYVALLIAMLFFIYAVIGMQVFGKVAMRDNNQINRNNNFQTFPQAVLLLFRCATGEAWQEIMLACLPGKRCDPESDYNPGEEYTCGSNFAIIYFISFYMLCAFLIINLFVAVIMDNFDYLTRDWSILGPHHLDEFKRIWSEYDPEAKGRIKHLDVVTLLRRIQPPLGFGKLCPHRVACKRLVAMNMPLNSDGTVMFNATLFALVRTALKIKTEGNLEQANEELRAVIKKIWKKTSMKLLDQVVPPAGDDEVTVGKFYATFLIQDYFRKFKKRKEQGLVGKYPAKNTTIALQAGLRTLHDIGPEIRRAISCDLQDDEPEENNPDEEEEVYKRNGALFGNHINHISSDRRDSFQQINTTHRPLHVQRPSIPSASDTEKNIYPHTGNSVYHNHHNHNSVGKQVPNSTNANLNNANVSKVVHGKHANFGSHEHRSENGYHSYSRADHEKRRRPSSRRTRYYETYIRSDSGDGRRPTICREERDIRDYCNDDHYLGEQEYYSGEEYYEEDSMLSGNRHVYDYHCRHHCHDSDFERPKGYHHPHGFFEEDDSQTCYDTKRSPRRRLLPPTPASNRRSSFNFECLRRQSSQDDIPLSPNFHHRTALPLHLMQQQVMAVAGLDSSKAHKHSPSRSTRSWATPPATPPNRDHTPYYTPLIQVDRAESTEHMNGSLPSLHRSSWYTDDPDISYRTFTPANLTVPNDFRHKHSDKQRSADSLVEAVLISEGLGRYAKDPKFVSATKHEIADACDMTIDEMESAASNLLNGNISNGTNGDMFPILSRQDYELQDFGPGYSDEEPEPGRYEEDLADEMICITSL.

Residues 1 to 10 are compositionally biased toward low complexity; it reads MQHHQQQQPE. Disordered regions lie at residues 1–44 and 57–96; these read MQHH…SKQT and QAKAAQNMNTTTAQPVGSLSQRKRQQYAKSKKQGNTSNSR. Residues 1–121 lie on the Cytoplasmic side of the membrane; that stretch reads MQHHQQQQPE…RACISLVEWK (121 aa). 2 stretches are compositionally biased toward polar residues: residues 31-44 and 63-76; these read PTTQSNSSAPSKQT and NMNTTTAQPVGSLS. Residues 77 to 88 show a composition bias toward basic residues; sequence QRKRQQYAKSKK. One copy of the I repeat lies at 108–404; sequence NPIRRACISL…LVLGVLSGEF (297 aa). The chain crosses the membrane as a helical span at residues 122–140; that stretch reads PFDIFILLSIFANCVALAV. The Extracellular portion of the chain corresponds to 141 to 158; the sequence is YIPFPEDDSNSTNHNLEK. An N-linked (GlcNAc...) asparagine glycan is attached at Asn150. A helical transmembrane segment spans residues 159–178; that stretch reads VEYAFLIIFTVETFLKIIAY. The Cytoplasmic segment spans residues 179 to 190; the sequence is GLLLHPNAYVRN. The helical transmembrane segment at 191 to 209 threads the bilayer; the sequence is GWNLLDFVIVVVGLFSVIL. At 210-230 the chain is on the extracellular side; it reads EQLTKETEGGSHSGGKPGGFD. The chain crosses the membrane as a helical span at residues 231 to 249; it reads VKALRAFRVLRPLRLVSGV. At 250-268 the chain is on the cytoplasmic side; that stretch reads PSLQVVLNSIIKAMVPLLH. Residues 269 to 288 traverse the membrane as a helical segment; it reads IALLVLFVIIIYAIIGLELF. The Extracellular segment spans residues 289–376; that stretch reads IGKMHKSCFL…WVNDAIGCEW (88 aa). N-linked (GlcNAc...) asparagine glycosylation occurs at Asn324. Glu359 provides a ligand contact to Ca(2+). Residues 377–401 form a helical membrane-spanning segment; the sequence is PWIYFVSLIILGSFFVLNLVLGVLS. The Cytoplasmic portion of the chain corresponds to 402 to 544; the sequence is GEFSKEREKA…RKCRAAVKSV (143 aa). The interval 424–441 is binding to the beta subunit; the sequence is QQLEEDLKGYLDWITQAE. Positions 478 to 500 are disordered; the sequence is GRSSNKHASMPTSETESVNTENV. The II repeat unit spans residues 530–776; the sequence is NRFNRRKCRA…VFLAIAVDNL (247 aa). Residues 545–564 traverse the membrane as a helical segment; that stretch reads TFYWLVIVLVFLNTLTISSE. At 565-579 the chain is on the extracellular side; it reads HYNQPDWLTQIQDIA. A helical transmembrane segment spans residues 580-598; that stretch reads NKVLLALFTCEMLVKMYSL. The Cytoplasmic segment spans residues 599–606; sequence GLQAYFVS. The helical transmembrane segment at 607–625 threads the bilayer; the sequence is LFNRFDCFVVCGGIVETIL. Over 626 to 635 the chain is Extracellular; that stretch reads VELEIMSPLG. A helical membrane pass occupies residues 636–654; it reads ISVFRCVRLLRIFKVTRHW. Topologically, residues 655-673 are cytoplasmic; that stretch reads ASLSNLVASLLNSMKSIAS. A helical transmembrane segment spans residues 674–694; it reads LLLLLFLFIIIFSLLGMQLFG. Residues 695–748 are Extracellular-facing; it reads GKFNFDETQTKRSTFDNFPQALLTVFQILTGEDWNAVMYDGIMAYGGPSSSGMI. A Ca(2+)-binding site is contributed by Glu726. Residues 749 to 773 traverse the membrane as a helical segment; the sequence is VCIYFIILFICGNYILLNVFLAIAV. The Cytoplasmic segment spans residues 774–907; it reads DNLADAESLN…VGCHRLINHH (134 aa). A compositionally biased stretch (basic and acidic residues) spans 787 to 823; the sequence is KEEAEEKERKKNARKESLENKKSEKSEGDQKKPKDSK. The tract at residues 787–869 is disordered; the sequence is KEEAEEKERK…VPAGPRPRRI (83 aa). Over residues 847 to 859 the composition is skewed to acidic residues; sequence VGEDEEDEEDEPE. The III repeat unit spans residues 894–1176; the sequence is NPIRVGCHRL…IFVGFVIVTF (283 aa). The chain crosses the membrane as a helical span at residues 908–926; that stretch reads IFTNLILVFIMLSSVSLAA. Residues 927 to 942 lie on the Extracellular side of the membrane; the sequence is EDPIRSHSFRNNILGY. The helical transmembrane segment at 943 to 962 threads the bilayer; sequence ADYVFTSMFTFEIILKMTAF. Topologically, residues 963–974 are cytoplasmic; sequence GAFLHKGSFCRN. The chain crosses the membrane as a helical span at residues 975–993; that stretch reads YFNLLDLLVVGVSLVSFGI. The Extracellular portion of the chain corresponds to 994–999; the sequence is QSSAIS. The helical transmembrane segment at 1000 to 1019 threads the bilayer; that stretch reads VVKILRVLRVLRPLRAINRA. At 1020–1038 the chain is on the cytoplasmic side; the sequence is KGLKHVVQCVFVAIRTIGN. The chain crosses the membrane as a helical span at residues 1039 to 1058; that stretch reads IMIVTTLLQFMFACIGVQLF. Residues 1059 to 1148 are Extracellular-facing; that stretch reads KGKFYKCTDE…VGPVYNYRVE (90 aa). The dihydropyridine binding stretch occupies residues 1096 to 1186; that stretch reads RVWQNSDFNF…QEQGEQEYKN (91 aa). Glu1122 provides a ligand contact to Ca(2+). Residues 1149-1169 form a helical membrane-spanning segment; it reads ISIFFIIYIIIIAFFMMNIFV. At 1170 to 1226 the chain is on the cytoplasmic side; the sequence is GFVIVTFQEQGEQEYKNCELDKNQRQCVEYALKARPLRRYIPKNPYQYKFWYVVNST. An IV repeat occupies 1213 to 1496; that stretch reads NPYQYKFWYV…LFVAVIMDNF (284 aa). A helical membrane pass occupies residues 1227-1245; it reads GFEYIMFVLIMLNTLCLAM. Topologically, residues 1246–1260 are extracellular; it reads QHYGQSKLFNDAMDI. A helical membrane pass occupies residues 1261-1280; the sequence is MNMVFTGVFTVEMVLKLIAF. Over 1281–1297 the chain is Cytoplasmic; the sequence is KPKIFVRKKERWLGYFS. Residues 1298 to 1319 traverse the membrane as a helical segment; it reads DAWNTFDSLIVIGSIVDVVLSE. The Extracellular segment spans residues 1320–1342; it reads ADPKPTETVTTDESGNSEDSARI. Residues 1343 to 1362 form a helical membrane-spanning segment; that stretch reads SITFFRLFRVMRLVKLLSRG. Topologically, residues 1363–1381 are cytoplasmic; the sequence is EGIRTLLWTFIKSFQALPY. Residues 1382-1401 form a helical membrane-spanning segment; sequence VALLIAMLFFIYAVIGMQVF. Topologically, residues 1402-1468 are extracellular; sequence GKVAMRDNNQ…GEEYTCGSNF (67 aa). The segment at 1449–1515 is dihydropyridine binding; that stretch reads RCDPESDYNP…LGPHHLDEFK (67 aa). Positions 1461-1504 are phenylalkylamine binding; it reads EYTCGSNFAIIYFISFYMLCAFLIINLFVAVIMDNFDYLTRDWS. Residues 1469 to 1493 traverse the membrane as a helical segment; sequence AIIYFISFYMLCAFLIINLFVAVIM. Residues 1494–2190 are Cytoplasmic-facing; that stretch reads DNFDYLTRDW…ADEMICITSL (697 aa). 4 disordered regions span residues 1736 to 1787, 1803 to 1833, 1917 to 1952, and 1995 to 2025; these read THRP…NANL, FGSHEHRSENGYHSYSRADHEKRRRPSSRRT, HGFFEEDDSQTCYDTKRSPRRRLLPPTPASNRRSSF, and SSKAHKHSPSRSTRSWATPPATPPNRDHTPY. Over residues 1805–1823 the composition is skewed to basic and acidic residues; it reads SHEHRSENGYHSYSRADHE. Residues 1824-1833 are compositionally biased toward basic residues; the sequence is KRRRPSSRRT.

This sequence belongs to the calcium channel alpha-1 subunit (TC 1.A.1.11) family. CACNA1D subfamily. In terms of assembly, voltage-dependent calcium channels are multisubunit complexes, consisting of alpha-1, alpha-2, beta and delta subunits in a 1:1:1:1 ratio. The channel activity is directed by the pore-forming and voltage-sensitive alpha-1 subunit. In many cases, this subunit is sufficient to generate voltage-sensitive calcium channel activity. The auxiliary subunits beta and alpha-2/delta linked by a disulfide bridge regulate the channel activity. Interacts with RIMBP2. In terms of tissue distribution, expressed in the basilar papilla of the cochlea.

It is found in the membrane. It catalyses the reaction Ca(2+)(in) = Ca(2+)(out). The isoform alpha-1D gives rise to L-type calcium currents. Long-lasting (L-type) calcium channels belong to the 'high-voltage activated' (HVA) group. The protein is Voltage-dependent L-type calcium channel subunit alpha-1D (CACNA1D) of Gallus gallus (Chicken).